Consider the following 133-residue polypeptide: Global transcriptional regulator Spx (133 aa).

Cys-10 and Cys-13 are disulfide-bonded.

It belongs to the ArsC family. Spx subfamily. In terms of assembly, interacts with the C-terminal domain of the alpha subunit of the RNAP.

The protein resides in the cytoplasm. In terms of biological role, global transcriptional regulator that plays a key role in stress response and exerts either positive or negative regulation of genes. Acts by interacting with the C-terminal domain of the alpha subunit of the RNA polymerase (RNAP). This interaction can enhance binding of RNAP to the promoter region of target genes and stimulate their transcription, or block interaction of RNAP with activator. The chain is Global transcriptional regulator Spx from Streptococcus pneumoniae serotype 4 (strain ATCC BAA-334 / TIGR4).